Consider the following 280-residue polypeptide: Formyltetrahydrofolate deformylase (280 aa).

In terms of domain architecture, ACT spans 8-86 (VLRTICPDQK…RELNPAGRRR (79 aa)). Residue D225 is part of the active site.

The protein belongs to the PurU family.

The enzyme catalyses (6R)-10-formyltetrahydrofolate + H2O = (6S)-5,6,7,8-tetrahydrofolate + formate + H(+). Its pathway is purine metabolism; IMP biosynthesis via de novo pathway; formate from 10-formyl-5,6,7,8-tetrahydrofolate: step 1/1. Its function is as follows. Catalyzes the hydrolysis of 10-formyltetrahydrofolate (formyl-FH4) to formate and tetrahydrofolate (FH4). This chain is Formyltetrahydrofolate deformylase, found in Escherichia coli O6:H1 (strain CFT073 / ATCC 700928 / UPEC).